The primary structure comprises 200 residues: Intraflagellar transport protein 43 homolog (200 aa).

Disordered regions lie at residues 56 to 76 and 175 to 200; these read KTGKSQRKTDDDDSQETIAAP and ERIDAKDQPSDSRSRNARETLISSKY. A compositionally biased stretch (basic and acidic residues) spans 175–192; sequence ERIDAKDQPSDSRSRNAR.

Belongs to the IFT43 family. Component of the IFT complex A (IFT-A) composed of at least che-11, daf-10, dyf-2, ift-139, ift-43 and ifta-1. Expressed in ciliated sensory neurons.

The protein localises to the cell projection. Its subcellular location is the cilium. Functionally, as a component of IFT complex A (IFT-A), a complex required for retrograde ciliary transport and entry into cilia of G protein-coupled receptors (GPCRs), it is involved in ciliogenesis. In particular, may act redundantly with the intraflagellar transport protein ift-139 to regulate the transport of specific ciliary cargo proteins such as che-3 which are related to motility. This Caenorhabditis elegans protein is Intraflagellar transport protein 43 homolog.